We begin with the raw amino-acid sequence, 190 residues long: Shikimate kinase (190 aa).

13-18 (GAGKTT) provides a ligand contact to ATP. Position 17 (T17) interacts with Mg(2+). Substrate-binding residues include D35, R59, and G81. Residue R119 coordinates ATP. A substrate-binding site is contributed by R138.

Belongs to the shikimate kinase family. As to quaternary structure, monomer. The cofactor is Mg(2+).

The protein resides in the cytoplasm. The catalysed reaction is shikimate + ATP = 3-phosphoshikimate + ADP + H(+). It participates in metabolic intermediate biosynthesis; chorismate biosynthesis; chorismate from D-erythrose 4-phosphate and phosphoenolpyruvate: step 5/7. In terms of biological role, catalyzes the specific phosphorylation of the 3-hydroxyl group of shikimic acid using ATP as a cosubstrate. The sequence is that of Shikimate kinase from Ralstonia nicotianae (strain ATCC BAA-1114 / GMI1000) (Ralstonia solanacearum).